A 508-amino-acid chain; its full sequence is DASH complex subunit ASK1 (508 aa).

Disordered stretches follow at residues 86–138 and 150–355; these read LVDG…TLSS and SRAA…QLRS. Over residues 116 to 138 the composition is skewed to polar residues; sequence EPSQYTPRPQTSAGGHDTTTLSS. Residues 161–175 are compositionally biased toward basic and acidic residues; sequence QHHDDSSVLTDRDGD. Residues 201-213 are compositionally biased toward acidic residues; it reads DEMDIDMDEEDSE. Basic and acidic residues predominate over residues 229–238; the sequence is RYYDDDHGFE. The span at 239-258 shows a compositional bias: acidic residues; sequence QGEEEEDEEEEEEEEEEEEG. The segment covering 326 to 338 has biased composition (basic and acidic residues); the sequence is IKQEDTEKKRPLW.

Belongs to the DASH complex ASK1 family. In terms of assembly, component of the DASH complex consisting of ASK1, DAD1, DAD2, DAD3, DAD4, DAM1, DUO1, HSK3, SPC19 and SPC34, with a stoichiometry of one copy of each subunit per complex. Multiple DASH complexes oligomerize to form a ring that encircles spindle microtubules and organizes the rod-like NDC80 complexes of the outer kinetochore. On cytoplasmic microtubules, DASH complexes appear to form patches instead of rings.

It is found in the chromosome. The protein localises to the centromere. The protein resides in the kinetochore. Its subcellular location is the cytoplasm. It localises to the cytoskeleton. It is found in the spindle. The protein localises to the nucleus. In terms of biological role, component of the DASH complex that connects microtubules with kinetochores and couples microtubule depolymerisation to chromosome movement; it is involved in retrieving kinetochores to the spindle poles before their re-orientation on the spindle in early mitosis and allows microtubule depolymerization to pull chromosomes apart and resist detachment during anaphase. Kinetochores, consisting of a centromere-associated inner segment and a microtubule-contacting outer segment, play a crucial role in chromosome segregation by mediating the physical connection between centromeric DNA and microtubules. Kinetochores also serve as an input point for the spindle assembly checkpoint, which delays anaphase until all chromosomes have bioriented on the mitotic spindle. The protein is DASH complex subunit ASK1 of Chaetomium thermophilum (strain DSM 1495 / CBS 144.50 / IMI 039719) (Thermochaetoides thermophila).